Consider the following 174-residue polypeptide: NADH-quinone oxidoreductase subunit B 2 (174 aa).

4 residues coordinate [4Fe-4S] cluster: cysteine 51, cysteine 52, cysteine 116, and cysteine 145.

Belongs to the complex I 20 kDa subunit family. As to quaternary structure, NDH-1 is composed of 14 different subunits. Subunits NuoB, C, D, E, F, and G constitute the peripheral sector of the complex. [4Fe-4S] cluster serves as cofactor.

Its subcellular location is the cell inner membrane. The enzyme catalyses a quinone + NADH + 5 H(+)(in) = a quinol + NAD(+) + 4 H(+)(out). In terms of biological role, NDH-1 shuttles electrons from NADH, via FMN and iron-sulfur (Fe-S) centers, to quinones in the respiratory chain. The immediate electron acceptor for the enzyme in this species is believed to be ubiquinone. Couples the redox reaction to proton translocation (for every two electrons transferred, four hydrogen ions are translocated across the cytoplasmic membrane), and thus conserves the redox energy in a proton gradient. This is NADH-quinone oxidoreductase subunit B 2 from Thermodesulfovibrio yellowstonii (strain ATCC 51303 / DSM 11347 / YP87).